A 579-amino-acid polypeptide reads, in one-letter code: SHC-transforming protein 1 (579 aa).

At methionine 1 the chain carries N-acetylmethionine. The segment at 1-137 (MDLLPPKPKY…QLGGEEWTRH (137 aa)) is disordered. Over residues 16-44 (ESLSSLEEGASGSTPPEELPSPSASSLGP) the composition is skewed to low complexity. A phosphoserine mark is found at serine 36 and serine 139. N6-acetyllysine is present on lysine 154. Residues 156–339 (MGPGVSYLVR…AGFDGSAWDE (184 aa)) enclose the PID domain. The tract at residues 337-357 (WDEEEEEPPDHQYYNDFPGKE) is disordered. Positions 340–483 (EEEEPPDHQY…SMAEQLQGEP (144 aa)) are CH1. A phosphotyrosine mark is found at tyrosine 349, tyrosine 350, and tyrosine 423. The tract at residues 432–451 (ARQAGGGAGPPNPSLNGSAP) is disordered. Serine 449 carries the post-translational modification Phosphoserine. The SH2 domain occupies 484 to 575 (WFHGKLSRRE…GSELCLQQPV (92 aa)).

Interacts with CPNE3; this interaction may mediate the binding of CPNE3 with ERBB2. Interacts with the NPXY motif of tyrosine-phosphorylated IGF1R and INSR in vitro via the PID domain. Once activated, binds to GRB2. Interacts with tyrosine-phosphorylated DDR2 and CD3T. Interacts with the N-terminal region of APS. Interacts with GRB7 and KIT. Interacts with PTK2/FAK1. Interacts with phosphorylated LRP1 and IRS4. Interacts with FLT4 (tyrosine-phosphorylated). Interacts with PDGFRB (tyrosine-phosphorylated). Interacts with ERBB4. Interacts with TEK/TIE2 (tyrosine-phosphorylated). Interacts with ALK, GAB2, TRIM31, INPP5D/SHIP1 and INPPL1/SHIP2. Interacts with PTPN6/SHP (tyrosine phosphorylated). Identified in a complex containing FGFR4, NCAM1, CDH2, PLCG1, FRS2, SRC, SHC1, GAP43 and CTTN. Interacts with EPHB1 and GRB2; activates the MAPK/ERK cascade to regulate cell migration. Interacts with the Trk receptors NTRK1, NTRK2 and NTRK3; in a phosphotyrosine-dependent manner. Interacts with CEACAM1; this interaction is CEACAM1-phosphorylation-dependent and mediates interaction with EGFR or INSR resulting in decrease coupling of SHC1 to the MAPK3/ERK1-MAPK1/ERK2 pathway. Interacts (via PID domain) with PEAK1 (when phosphorylated at 'Tyr-1177'). Found in a complex with PPP1CA, PPP1CC, SHC1 and PEAK1. In terms of processing, phosphorylated in response to FLT4 signaling. Tyrosine phosphorylated by ligand-activated PDGFRB. May be tyrosine phosphorylated by activated PTK2/FAK1. Tyrosine phosphorylated by TEK/TIE2. Tyrosine phosphorylated by activated PTK2B/PYK2. Dephosphorylation by PTPN2 may regulate interaction with GRB2. Phosphorylated by activated epidermal growth factor receptor. Phosphorylated in response to KIT signaling. Isoform p47Shc and isoform p52Shc are phosphorylated on tyrosine residues of the Pro-rich domain. Isoform p66Shc is phosphorylated on Ser-36 by PRKCB upon treatment with insulin, hydrogen peroxide or irradiation with ultraviolet light. FLT3 signaling promotes tyrosine phosphorylation of isoform p47Shc and isoform p52Shc. Also tyrosine phosphorylated by ligand-activated ALK. Widely expressed. Expressed in neural stem cells but absent in mature neurons.

The protein localises to the cytoplasm. It localises to the cell junction. Its subcellular location is the focal adhesion. It is found in the mitochondrion matrix. The protein resides in the mitochondrion. Functionally, signaling adapter that couples activated growth factor receptors to signaling pathways. Participates in signaling downstream of the angiopoietin receptor TEK/TIE2, and plays a role in the regulation of endothelial cell migration and sprouting angiogenesis. Participates in a signaling cascade initiated by activated KIT and KITLG/SCF. Isoform p47Shc and isoform p52Shc, once phosphorylated, couple activated receptor kinases to Ras via the recruitment of the GRB2/SOS complex and are implicated in the cytoplasmic propagation of mitogenic signals. Isoform p47Shc and isoform p52 may thus function as initiators of the Ras signaling cascade in various non-neuronal systems. Isoform p66Shc does not mediate Ras activation, but is involved in signal transduction pathways that regulate the cellular response to oxidative stress and life span. Isoform p66Shc acts as a downstream target of the tumor suppressor p53 and is indispensable for the ability of stress-activated p53 to induce elevation of intracellular oxidants, cytochrome c release and apoptosis. The expression of isoform p66Shc has been correlated with life span. The protein is SHC-transforming protein 1 (Shc1) of Mus musculus (Mouse).